We begin with the raw amino-acid sequence, 478 residues long: Cell division protein FtsZ homolog 2-1, chloroplastic (478 aa).

Residues 86-112 (EGTSTIVNPRKETSSGPVVEDFEEPSA) form a disordered region. 128 to 132 (GGGSN) is a binding site for GTP. Phosphoserine; by PGK1 is present on S143. Residues 217 to 219 (GTG), E248, and R252 each bind GTP. Position 286 is a phosphothreonine; by PGK1 (T286). A GTP-binding site is contributed by D296.

Belongs to the FtsZ family. Aggregates to form a contractile ring-like structure; contraction of the ring was accompanied by an increase in the filament turnover rate. Self-interacts and binds to FTSZ1 in heteromers to form two morphologically distinct types of filaments, termed type-I (smooth filaments) and -II (rough filaments), in a GTP-dependent manner; the GDP-induced disassembly is inhibited by ARC6. Interacts (via C-terminus) with ARC6; this interaction enables ARC3 binding to FTSZ2. Part of a complex made of ARC3, ARC6, FTSZ1 and FTSZ2. Binds to MCD1 in an ARC6-dependent manner. Binds to CDP1/PARC6. Part of a complex made of CDP1/PARC6, ARC3 and FtsZ proteins in the middle of the plastid; this complex enhances the dynamics of Z rings during chloroplast division. Binds to PGK1. In terms of processing, filaments containing FTSZ2-1 are stabilized when in complex with GTP but destabilized after conversion of GTP into GDP; ARC6 conteracts this destabilisation by preventing the dissociation of GDP-bound FTSZ2 molecules thus inhibiting filament disassembly whereas ARC3 promotes GTPase activity thus accelerating the conversion of GTP into GDP and triggering FtsZ2 filaments disassembly. Phosphorylation at Ser-143 is necessary for interactions with ARC3, ARC6, FTSZ1 and FTSZ2-2. Phosphorylations at Ser-143 and Thr-286 are required for the formation of contractile ring at the chloroplast midpoint.

It is found in the plastid. It localises to the chloroplast stroma. The protein resides in the chloroplast thylakoid membrane. GTPase activity is enhanced by ARC3. Functionally, exhibits GTPase activity which converts GTP ligands to GDP. Component of the plastid division machinery consisting in a binary fission accomplished by the simultaneous constriction of the FtsZ ring on the stromal side of the inner envelope membrane, and the ARC5 ring on the cytosolic side of the outer envelope membrane. Required for plastid division in a dose-dependent manner. In the vegetative shoot apex, at the shoot apical meristem (SAM), where the proplastid-to-chloroplast transition takes place, major contributor of plastid division in the L1 and L3 layers and contributes equally with FTSZ1 in the L2 layer. The chain is Cell division protein FtsZ homolog 2-1, chloroplastic from Arabidopsis thaliana (Mouse-ear cress).